The sequence spans 1279 residues: ATP-dependent helicase/nuclease subunit A (1279 aa).

Residues 4–499 (TKWTDEQRQA…VKLFKNFRSR (496 aa)) form the UvrD-like helicase ATP-binding domain. 25–32 (AGAGAGKT) provides a ligand contact to ATP. The 328-residue stretch at 526-853 (EEALKVGASY…RIMSIHKSKG (328 aa)) folds into the UvrD-like helicase C-terminal domain.

The protein belongs to the helicase family. AddA subfamily. As to quaternary structure, heterodimer of AddA and AddB/RexB. It depends on Mg(2+) as a cofactor.

The catalysed reaction is Couples ATP hydrolysis with the unwinding of duplex DNA by translocating in the 3'-5' direction.. It catalyses the reaction ATP + H2O = ADP + phosphate + H(+). Functionally, the heterodimer acts as both an ATP-dependent DNA helicase and an ATP-dependent, dual-direction single-stranded exonuclease. Recognizes the chi site generating a DNA molecule suitable for the initiation of homologous recombination. The AddA nuclease domain is required for chi fragment generation; this subunit has the helicase and 3' -&gt; 5' nuclease activities. In Clostridium botulinum (strain Loch Maree / Type A3), this protein is ATP-dependent helicase/nuclease subunit A.